Here is a 194-residue protein sequence, read N- to C-terminus: Adenylate kinase (194 aa).

Residue 10–15 (GAGKGT) participates in ATP binding. The NMP stretch occupies residues 30-59 (STGDMLRAAVAQQSEIGKRAKAVMDAGQLV). AMP-binding positions include Thr-31, Arg-36, 57–59 (QLV), 85–88 (GYPR), and Gln-92. The interval 126–142 (SRVAETIAKGGQVRSDD) is LID. An ATP-binding site is contributed by Arg-127. AMP-binding residues include Arg-139 and Arg-150. Ala-178 contributes to the ATP binding site.

This sequence belongs to the adenylate kinase family. As to quaternary structure, monomer.

It localises to the cytoplasm. The catalysed reaction is AMP + ATP = 2 ADP. It functions in the pathway purine metabolism; AMP biosynthesis via salvage pathway; AMP from ADP: step 1/1. Catalyzes the reversible transfer of the terminal phosphate group between ATP and AMP. Plays an important role in cellular energy homeostasis and in adenine nucleotide metabolism. The chain is Adenylate kinase from Brucella abortus (strain S19).